A 744-amino-acid polypeptide reads, in one-letter code: Photosystem I P700 chlorophyll a apoprotein A2 (744 aa).

Helical transmembrane passes span 48–71 (LFATHFGHLAIIFLWASGNVFHIA), 137–160 (LYAGAIGLLLLAAVFLFAGWLHLQ), 177–201 (LNHHLAGLFGVSSLAWTGHLVHVAI), 275–293 (MAHHHLAIAVIFIVAGHMY), 337–360 (LHFQLALALACLGVVTSLVAQHMY), 376–402 (AALYTHHQYIAGFLMVGAFAHGAIFLV), 424–446 (AIISHLSWVSLFLGFHTLGLYVH), and 527–545 (FLVHHAIALGLHTTTLILV). The [4Fe-4S] cluster site is built by Cys569 and Cys578. 2 helical membrane passes run 585-606 (AFYLAMFWMLNTIGWVTFYWHW) and 653-675 (LAVWAWMFLFGHLVWATGFMFLI). The chlorophyll a site is built by His664, Met672, and Tyr680. Phylloquinone is bound at residue Trp681. The chain crosses the membrane as a helical span at residues 717-737 (LVGLAHFTVGYVLTYAAFVIA).

It belongs to the PsaA/PsaB family. As to quaternary structure, the PsaA/B heterodimer binds the P700 chlorophyll special pair and subsequent electron acceptors. PSI consists of a core antenna complex that captures photons, and an electron transfer chain that converts photonic excitation into a charge separation. The cyanobacterial PSI reaction center is composed of one copy each of PsaA,B,C,D,E,F,I,J,K,L,M and X, and forms trimeric complexes. PSI electron transfer chain: 5 chlorophyll a, 1 chlorophyll a', 2 phylloquinones and 3 4Fe-4S clusters. PSI core antenna: 90 chlorophyll a, 22 carotenoids, 3 phospholipids and 1 galactolipid. P700 is a chlorophyll a/chlorophyll a' dimer, A0 is one or more chlorophyll a, A1 is one or both phylloquinones and FX is a shared 4Fe-4S iron-sulfur center. is required as a cofactor.

The protein resides in the cellular thylakoid membrane. It catalyses the reaction reduced [plastocyanin] + hnu + oxidized [2Fe-2S]-[ferredoxin] = oxidized [plastocyanin] + reduced [2Fe-2S]-[ferredoxin]. Functionally, psaA and PsaB bind P700, the primary electron donor of photosystem I (PSI), as well as the electron acceptors A0, A1 and FX. PSI is a plastocyanin/cytochrome c6-ferredoxin oxidoreductase, converting photonic excitation into a charge separation, which transfers an electron from the donor P700 chlorophyll pair to the spectroscopically characterized acceptors A0, A1, FX, FA and FB in turn. Oxidized P700 is reduced on the lumenal side of the thylakoid membrane by plastocyanin or cytochrome c6. The polypeptide is Photosystem I P700 chlorophyll a apoprotein A2 (Synechococcus sp. (strain JA-2-3B'a(2-13)) (Cyanobacteria bacterium Yellowstone B-Prime)).